The following is a 685-amino-acid chain: Cilia- and flagella-associated protein 36 (685 aa).

A disordered region spans residues 1 to 20; sequence MLRRFSKKNKNPEGGSDDAS. The stretch at 197 to 242 forms a coiled coil; that stretch reads SEELEMMAQNSRIQREALEQEIRKEEILLQQALDEGARAQNQNQNQ. Residues 287 to 310 are compositionally biased toward low complexity; sequence TGTMTSSTGVSVGTLTNTGVSSGT. The segment at 287 to 573 is disordered; that stretch reads TGTMTSSTGV…LRGNKYDGDV (287 aa). Basic and acidic residues predominate over residues 363-372; that stretch reads EAEKSKRERP. The segment covering 410-434 has biased composition (polar residues); that stretch reads GTTSKKSIATVTASPEMSSKTTQME. Composition is skewed to basic and acidic residues over residues 439–456 and 508–557; these read GEGK…ERKY and HEPR…ESKP.

The protein belongs to the CFAP36 family. In terms of tissue distribution, expressed in amphid and phasmid ciliated neurons.

It is found in the cell projection. The protein localises to the cilium. The protein resides in the cytoplasm. Its subcellular location is the cytoskeleton. It localises to the cilium axoneme. This Caenorhabditis elegans protein is Cilia- and flagella-associated protein 36.